Here is a 1254-residue protein sequence, read N- to C-terminus: MEDGKPVWAPHPTDGFQVGNIVDIGPDSLTIEPLNQKGKTFLALINQVFPAEEDSKKDVEDNCSLMYLNEATLLHNIKVRYSKDRIYTYVANILIAVNPYFDIPKIYSSETIKSYQGKSLGTMPPHVFAIADKAFRDMKVLKLSQSIIVSGESGAGKTENTKFVLRYLTESYGTGQDIDDRIVEANPLLEAFGNAKTVRNNNSSRFGKFVEIHFNEKSSVVGGFVSHYLLEKSRICVQGKEERNYHIFYRLCAGASEDIRERLHLSSPDNFRYLNRGCTRYFANKETDKQILQNRKSPEYLKAGSLKDPLLDDHGDFIRMCTAMKKIGLDDEEKLDLFRVVAGVLHLGNIDFEEAGSTSGGCNLKNKSTQALEYCAEKLLGLDQDDLRVSLTTRVMLTTAGGAKGTVIKVPLKVEQANNARDALAKTVYSHLFDHVVNRVNQCFPFETSSYFIGVLDIAGFEYFEHNSFEQFCINYCNEKLQQFFNERILKEEQELYQKEGLGVNEVHYVDNQDCIDLIEARLVGILDILDEENRLPQPSDQHFTSAGHQKHKDHFRLSIPRKSKLAIHRNIAYDEGFIIRHFAGAVCYETTQFVEKNNDALHMSLESLICESRDKFIRELFESSTNNNKDTKQKAGKLSFISVGNKFKTQLNLLLDKLRSTGASFIRCIKPNLKMTSHHFEGAQILSQLQCSGMVSVLDLMQGGFPSRASFHEVYNMYKKSLPDKLARLDPRLFCKALFKALGLNEIDYKFGLTKVFFRPGKFAEFDQIMKSDPDHLAELVKRVNHWLICSRWKKVQWCSLSVIKLKNKIKYRAEACIKMQKTIRMWLCKRRHKPRIDGLVKVGTLKKRLDKFNEVVSALKDGKQEMSKQVKDLEISIDALMAKIKSTMMTREQIQKEYDALVKSSAVLLSALQKKKQQEEEAERLRRIQEEMEKERKRREEDEQRRRKEEEERRMKLEMEAKRKQEEEERKKREDDEKRIQAEVEAQLARQREEESQQQAVLEQERRDRELALRIAQSEAELISDEAQADPGLRRGPAVQATKAAAGTKKYDLSKWKYAELRDTINTSCDIELLAACREEFHRRLKVYHAWKSKNKKRNTETEQRAPKSVTDYAQQNPAVQLPARQQEIEMNRQQRFFRIPFIRSADQYKDPQNKKKGWWYAHFDGPWIARQMELHPDKPPILLVAGKDDMEMCELNLEETGLTRKRGAEILPRQFEEIWERCGGIQYLQNAIESRQARPTYATAMLQNLLK.

One can recognise a Myosin N-terminal SH3-like domain in the interval 2–53 (EDGKPVWAPHPTDGFQVGNIVDIGPDSLTIEPLNQKGKTFLALINQVFPAEE). The region spanning 57–772 (KDVEDNCSLM…KFAEFDQIMK (716 aa)) is the Myosin motor domain. Residue 151–158 (GESGAGKT) coordinates ATP. The residue at position 267 (Ser267) is a Phosphoserine. The interval 273-317 (YLNRGCTRYFANKETDKQILQNRKSPEYLKAGSLKDPLLDDHGDF) is responsible for slow ATPase activity. Thr406 carries the post-translational modification Phosphothreonine. Ser605 carries the phosphoserine modification. The interval 666–673 (FIRCIKPN) is actin-binding. The required for binding calmodulin stretch occupies residues 783-811 (KRVNHWLICSRWKKVQWCSLSVIKLKNKI). The IQ domain occupies 814–843 (RAEACIKMQKTIRMWLCKRRHKPRIDGLVK). A three-helix bundle region spans residues 836–917 (PRIDGLVKVG…AVLLSALQKK (82 aa)). Positions 918–985 (KQQEEEAERL…EDDEKRIQAE (68 aa)) are SAH. The interval 935–956 (EKERKRREEDEQRRRKEEEERR) is disordered. Ser1026 is subject to Phosphoserine. Residues 1037-1245 (RGPAVQATKA…ESRQARPTYA (209 aa)) are interaction with TAX1BP1 and CALCOCO2/NDP52. The tract at residues 1085–1087 (RRL) is interaction with OPTN. The disordered stretch occupies residues 1096–1117 (KNKKRNTETEQRAPKSVTDYAQ). Residues 1117 to 1245 (QQNPAVQLPA…ESRQARPTYA (129 aa)) form an interaction with TOM1 region.

This sequence belongs to the TRAFAC class myosin-kinesin ATPase superfamily. Myosin family. Homodimer; dimerization seems to implicate the unfolding of the three-helix bundle region creating an additional calmodulin binding site, and cargo binding. Component of the DISP/DOCK7-induced septin displacement complex, at least composed of DOCK7, LRCH3 and MYO6. Able to function as a monomer under specific conditions in vitro. Forms a complex with CFTR and DAB2 in the apical membrane of epithelial cells. Binding to calmodulin through a unique insert, not found in other myosins, located in the neck region between the motor domain and the IQ domain appears to contribute to the directionality reversal. This interaction occurs only if the C-terminal lobe of calmodulin is occupied by calcium. Interaction with F-actin/ACTN1 occurs only at the apical brush border domain of the proximal tubule cells. Interacts with DAB2. In vitro, the C-terminal globular tail binds a C-terminal region of DAB2. Interacts with CFTR. Interacts with CABP5. Interacts (via residues 1117-1245) with TOM1 (via residues 392-463). Interacts (via residues 1060-1285) with OPTN. Interacts (via residues 1060-1285) with TAX1BP1 and CALCOCO2/NDP52. Interacts with TOM1L2. Interacts with CLIC5; may work together in a complex which also includes RDX and MYO6 to stabilize linkages between the plasma membrane and subjacent actin cytoskeleton at the base of stereocilia. Post-translationally, phosphorylation in the motor domain, induced by EGF, results in translocation of MYO6 from the cell surface to membrane ruffles and affects F-actin dynamics. Phosphorylated in vitro by p21-activated kinase (PAK). As to expression, expressed in all tissues examined including kidney cortex, intestinal mucosa, liver, lung, heart, jowl muscle, brain cortex and medulla, and in the epithelial cell line, LLC-PK1 (at protein level). In the kidney, located to the brush border of adult kidney proximal tubule cells.

The protein resides in the golgi apparatus. It localises to the trans-Golgi network membrane. Its subcellular location is the nucleus. The protein localises to the cytoplasm. It is found in the perinuclear region. The protein resides in the membrane. It localises to the clathrin-coated pit. Its subcellular location is the cytoplasmic vesicle. The protein localises to the clathrin-coated vesicle. It is found in the cell projection. The protein resides in the filopodium. It localises to the ruffle membrane. Its subcellular location is the microvillus. The protein localises to the cytosol. Functionally, myosins are actin-based motor molecules with ATPase activity. Unconventional myosins serve in intracellular movements. Myosin 6 is a reverse-direction motor protein that moves towards the minus-end of actin filaments. Has slow rate of actin-activated ADP release due to weak ATP binding. Functions in a variety of intracellular processes such as vesicular membrane trafficking and cell migration. Required for the structural integrity of the Golgi apparatus via the p53-dependent pro-survival pathway. Appears to be involved in a very early step of clathrin-mediated endocytosis in polarized epithelial cells. Together with TOM1, mediates delivery of endocytic cargo to autophagosomes thereby promoting autophagosome maturation and driving fusion with lysosomes. Links TOM1 with autophagy receptors, such as TAX1BP1; CALCOCO2/NDP52 and OPTN. May act as a regulator of F-actin dynamics. As part of the DISP complex, may regulate the association of septins with actin and thereby regulate the actin cytoskeleton. May play a role in transporting DAB2 from the plasma membrane to specific cellular targets. May play a role in the extension and network organization of neurites. Required for structural integrity of inner ear hair cells. Required for the correct localization of CLIC5 and RDX at the stereocilium base. Modulates RNA polymerase II-dependent transcription. This chain is Unconventional myosin-VI (MYO6), found in Sus scrofa (Pig).